Consider the following 304-residue polypeptide: Putative AraC-like transcription regulator (304 aa).

Positions Ala202–His300 constitute an HTH araC/xylS-type domain. 2 consecutive DNA-binding regions (H-T-H motif) follow at residues Ala219 to Val240 and Leu267 to Leu290.

The protein is Putative AraC-like transcription regulator of Streptomyces lividans.